A 341-amino-acid polypeptide reads, in one-letter code: Methionine import ATP-binding protein MetN (341 aa).

The region spanning I2–V241 is the ABC transporter domain. G38–S45 is an ATP binding site.

Belongs to the ABC transporter superfamily. Methionine importer (TC 3.A.1.24) family. As to quaternary structure, the complex is composed of two ATP-binding proteins (MetN), two transmembrane proteins (MetI) and a solute-binding protein (MetQ).

The protein localises to the cell membrane. It carries out the reaction L-methionine(out) + ATP + H2O = L-methionine(in) + ADP + phosphate + H(+). The enzyme catalyses D-methionine(out) + ATP + H2O = D-methionine(in) + ADP + phosphate + H(+). Its function is as follows. Part of the ABC transporter complex MetNIQ involved in methionine import. Responsible for energy coupling to the transport system. The protein is Methionine import ATP-binding protein MetN of Staphylococcus haemolyticus (strain JCSC1435).